We begin with the raw amino-acid sequence, 466 residues long: Reticulophagy regulator 3 (466 aa).

The tract at residues 1–28 (MAEAEGVPTTPGPASGSTFRGRRDVSGS) is disordered. Alanine 2 is modified (N-acetylalanine). Residues 2-80 (AEAEGVPTTP…WCLGLNAAFW (79 aa)) are Cytoplasmic-facing. Position 10 is a phosphothreonine (threonine 10). Serine 26 carries the phosphoserine modification. A helical membrane pass occupies residues 81–101 (FFALTSLRLVFLLAFGLMIIV). At 102 to 163 (CIDQWKNKIW…FIRNVLLFKK (62 aa)) the chain is on the lumenal side. A helical transmembrane segment spans residues 164-184 (QNPGKFCLLSCGILTFLAVLG). Residues 185 to 186 (RY) lie on the Cytoplasmic side of the membrane. Residues 187 to 207 (VPGLLLSYLMLVTVMMWPLAV) form a helical membrane-spanning segment. The Lumenal portion of the chain corresponds to 208-381 (YHRLWDRAYV…ASRDEAALPE (174 aa)). 2 positions are modified to phosphoserine: serine 258 and serine 260. Residue threonine 283 is modified to Phosphothreonine. The segment at 284 to 374 (DSEHSDAEVS…EEPQAPPASR (91 aa)) is disordered. Phosphoserine is present on residues serine 285, serine 288, serine 293, and serine 303. Residues 294-310 (CTDNGTFNLSRGQTPLT) are compositionally biased toward polar residues. Threonine 307 and threonine 310 each carry phosphothreonine. Phosphoserine is present on residues serine 313, serine 320, and serine 360. Positions 316–331 (LDGHSDPEESFARDLP) are enriched in basic and acidic residues. Residues 382 to 402 (LLLGALPVGSNLTSNLASLVS) form a helical membrane-spanning segment. Residues 403-466 (QGMIQLALSG…QLDPASSRSH (64 aa)) are Cytoplasmic-facing. A disordered region spans residues 412–466 (GASQPGPSGAPAQRATRGFLRSPSSDLDTDAEGDDFELLDQSELSQLDPASSRSH). Over residues 438 to 451 (LDTDAEGDDFELLD) the composition is skewed to acidic residues. Threonine 440 carries the phosphothreonine modification. An LIR motif motif is present at residues 445–450 (DDFELL). The segment covering 453-466 (SELSQLDPASSRSH) has biased composition (polar residues).

It belongs to the RETREG family. In terms of assembly, interacts with ATG8 family modifier proteins MAP1LC3A, MAP1LC3B, MAP1LC3C, GABARAP, GABARAPL1 and GABARAPL2. Interacts with CANX. Interacts with RTN4 isoform B.

It localises to the endoplasmic reticulum membrane. Endoplasmic reticulum (ER)-anchored autophagy regulator which exists in an inactive state under basal conditions but is activated following cellular stress. When activated, induces ER fragmentation and mediates ER delivery into lysosomes through sequestration into autophagosomes via interaction with ATG8 family proteins. Promotes ER membrane curvature and ER tubulation required for subsequent ER fragmentation and engulfment into autophagosomes. Required for collagen quality control in a LIR motif-dependent manner. Mediates NRF1-enhanced neurite outgrowth. This chain is Reticulophagy regulator 3, found in Homo sapiens (Human).